A 308-amino-acid chain; its full sequence is D-alanine--D-alanine ligase (308 aa).

The 198-residue stretch at 104-301 folds into the ATP-grasp domain; it reads KQIWQGSDLP…FDELCVAILE (198 aa). Position 130–185 (130–185) interacts with ATP; that stretch reads IAELGLPVIIKPVHEGSSVGMSKVEKAEDFAAAIEKATQHDAVVMAEKWITGREFT. 3 residues coordinate Mg(2+): Asp-255, Glu-268, and Asn-270.

This sequence belongs to the D-alanine--D-alanine ligase family. Requires Mg(2+) as cofactor. Mn(2+) serves as cofactor.

The protein localises to the cytoplasm. The catalysed reaction is 2 D-alanine + ATP = D-alanyl-D-alanine + ADP + phosphate + H(+). The protein operates within cell wall biogenesis; peptidoglycan biosynthesis. In terms of biological role, cell wall formation. The protein is D-alanine--D-alanine ligase of Acinetobacter baumannii (strain SDF).